The following is a 380-amino-acid chain: Anhydro-N-acetylmuramic acid kinase (380 aa).

9–16 (GTSADGVD) contributes to the ATP binding site.

Belongs to the anhydro-N-acetylmuramic acid kinase family.

The enzyme catalyses 1,6-anhydro-N-acetyl-beta-muramate + ATP + H2O = N-acetyl-D-muramate 6-phosphate + ADP + H(+). The protein operates within amino-sugar metabolism; 1,6-anhydro-N-acetylmuramate degradation. It functions in the pathway cell wall biogenesis; peptidoglycan recycling. Catalyzes the specific phosphorylation of 1,6-anhydro-N-acetylmuramic acid (anhMurNAc) with the simultaneous cleavage of the 1,6-anhydro ring, generating MurNAc-6-P. Is required for the utilization of anhMurNAc either imported from the medium or derived from its own cell wall murein, and thus plays a role in cell wall recycling. The chain is Anhydro-N-acetylmuramic acid kinase from Synechococcus sp. (strain CC9902).